Here is a 157-residue protein sequence, read N- to C-terminus: Protein Smg homolog (157 aa).

It belongs to the Smg family.

This chain is Protein Smg homolog, found in Aeromonas hydrophila subsp. hydrophila (strain ATCC 7966 / DSM 30187 / BCRC 13018 / CCUG 14551 / JCM 1027 / KCTC 2358 / NCIMB 9240 / NCTC 8049).